Consider the following 122-residue polypeptide: Small ribosomal subunit protein uS13 (122 aa).

A disordered region spans residues 95–122; the sequence is GLPVHGQRTHTNARTRKGPRKGAVGKKK.

The protein belongs to the universal ribosomal protein uS13 family. In terms of assembly, part of the 30S ribosomal subunit. Forms a loose heterodimer with protein S19. Forms two bridges to the 50S subunit in the 70S ribosome.

Its function is as follows. Located at the top of the head of the 30S subunit, it contacts several helices of the 16S rRNA. In the 70S ribosome it contacts the 23S rRNA (bridge B1a) and protein L5 of the 50S subunit (bridge B1b), connecting the 2 subunits; these bridges are implicated in subunit movement. Contacts the tRNAs in the A and P-sites. This is Small ribosomal subunit protein uS13 from Lawsonia intracellularis (strain PHE/MN1-00).